The chain runs to 449 residues: Galactosyl transferase CpsE (449 aa).

Transmembrane regions (helical) follow at residues 5-22 (VVVY…TPNF), 27-46 (DLLF…DFYR), 59-78 (MVLK…FFIF), 88-107 (SFFT…NSFL), and 258-280 (FLDI…FLVP).

It belongs to the bacterial sugar transferase family.

It is found in the cell membrane. Galactosyl transferase is essential for the assembly of the group B streptococci (GBS) type III capsular polysaccharide. May be involved in the formation of either or both galactosidic bonds by catalyzing the addition of galactose to an oligosaccharide precursor or to a lipid intermediate. Type III capsular polysaccharide consists of a linear backbone with short side chains ending in residues of N-acetylneuraminic acid or sialic acid. The presence of sialic acid on the surface of the organism inhibits activation of the alternative pathway of complement and is thought to be an important element in the virulence function of the capsule. This is Galactosyl transferase CpsE (cpsE) from Streptococcus agalactiae serotype III (strain NEM316).